We begin with the raw amino-acid sequence, 281 residues long: MEMO1 family protein Pars_0062 (281 aa).

It belongs to the MEMO1 family.

This is MEMO1 family protein Pars_0062 from Pyrobaculum arsenaticum (strain DSM 13514 / JCM 11321 / PZ6).